Reading from the N-terminus, the 528-residue chain is T-complex protein 1 subunit delta (528 aa).

This sequence belongs to the TCP-1 chaperonin family. As to quaternary structure, heterooligomeric complex of about 850 to 900 kDa that forms two stacked rings, 12 to 16 nm in diameter.

It is found in the cytoplasm. Functionally, molecular chaperone; assists the folding of proteins upon ATP hydrolysis. Known to play a role, in vitro, in the folding of actin and tubulin. In yeast may play a role in mitotic spindle formation. This Saccharomyces cerevisiae (strain ATCC 204508 / S288c) (Baker's yeast) protein is T-complex protein 1 subunit delta (CCT4).